A 319-amino-acid polypeptide reads, in one-letter code: Ribose-phosphate pyrophosphokinase (319 aa).

ATP is bound by residues 40–42 (DGE) and 99–100 (RQ). Mg(2+) contacts are provided by His-134 and Asp-174. Lys-198 is a catalytic residue. Residues Arg-200, Asp-224, and 228 to 232 (DTAGT) each bind D-ribose 5-phosphate.

The protein belongs to the ribose-phosphate pyrophosphokinase family. Class I subfamily. As to quaternary structure, homohexamer. Requires Mg(2+) as cofactor.

The protein resides in the cytoplasm. It catalyses the reaction D-ribose 5-phosphate + ATP = 5-phospho-alpha-D-ribose 1-diphosphate + AMP + H(+). It participates in metabolic intermediate biosynthesis; 5-phospho-alpha-D-ribose 1-diphosphate biosynthesis; 5-phospho-alpha-D-ribose 1-diphosphate from D-ribose 5-phosphate (route I): step 1/1. Involved in the biosynthesis of the central metabolite phospho-alpha-D-ribosyl-1-pyrophosphate (PRPP) via the transfer of pyrophosphoryl group from ATP to 1-hydroxyl of ribose-5-phosphate (Rib-5-P). The polypeptide is Ribose-phosphate pyrophosphokinase (Coxiella burnetii (strain RSA 493 / Nine Mile phase I)).